A 191-amino-acid polypeptide reads, in one-letter code: Heme-binding protein 1 (191 aa).

The protein belongs to the HEBP family. In terms of assembly, monomer.

The protein resides in the cytoplasm. Its function is as follows. May bind free porphyrinogens that may be present in the cell and thus facilitate removal of these potentially toxic compound. Binds with a high affinity to one molecule of heme or porphyrins. It binds metalloporphyrins, free porphyrins and N-methylprotoporphyrin with similar affinities. This Bos taurus (Bovine) protein is Heme-binding protein 1 (HEBP1).